The following is an 86-amino-acid chain: Small ribosomal subunit protein bS20 (86 aa).

The protein belongs to the bacterial ribosomal protein bS20 family.

In terms of biological role, binds directly to 16S ribosomal RNA. This is Small ribosomal subunit protein bS20 from Sulfurimonas denitrificans (strain ATCC 33889 / DSM 1251) (Thiomicrospira denitrificans (strain ATCC 33889 / DSM 1251)).